A 140-amino-acid polypeptide reads, in one-letter code: Early nodulin-like protein 22 (140 aa).

A signal peptide spans 1–28 (MAQSSGHVSYVAVTVPIAIVMTVLCLFL). The 100-residue stretch at 39-138 (TTYIVGGDDG…GLKMAIKALA (100 aa)) folds into the Phytocyanin domain. N-linked (GlcNAc...) asparagine glycosylation is present at asparagine 85. A disulfide bridge links cysteine 92 with cysteine 126.

The protein belongs to the early nodulin-like (ENODL) family.

In terms of biological role, may act as a carbohydrate transporter. In Arabidopsis thaliana (Mouse-ear cress), this protein is Early nodulin-like protein 22.